A 65-amino-acid polypeptide reads, in one-letter code: Alpha-conotoxine-like Am1.5 (65 aa).

A signal peptide spans 1-21; sequence MGMRMMFTVFLLVVLATTVVS. A propeptide spanning residues 22–46 is cleaved from the precursor; sequence FMSGRAFRDRNAAAKVSDLIALKAR. Glu49 carries the 4-carboxyglutamate modification. Positions 52-54 are ser-Xaa-Pro motif, crucial for potent interaction with nAChR; that stretch reads SHP. 2 positions are modified to 4-hydroxyproline: Pro54 and Pro61. Glu62 carries the post-translational modification 4-carboxyglutamate.

The protein belongs to the conotoxin A superfamily. Contains 2 disulfide bonds. As to expression, expressed by the venom duct.

The protein localises to the secreted. Alpha-conotoxins act on postsynaptic membranes, they bind to the nicotinic acetylcholine receptors (nAChR) and thus inhibit them. The protein is Alpha-conotoxine-like Am1.5 of Conus amadis (Amadis cone).